A 258-amino-acid polypeptide reads, in one-letter code: MESLSELQNPLLDKNSKHMVMADYGYGGDFHSNQYQENIINYFVTGGGGGGGGGGGGGGVAVTGGNGKAKSQLLDATSLHLAVEAFYKPNFILYKDDVSGKGKDYKNECCETTFMEKKDKEVVVETPSTEDPQAKLLDENDVKIQTVSYEVEEEEYVEYETDCSSDSESEDNFIVIPPRDHLGLAIFSMLCCFWPLGIAAFYFSQGTSKAVTKGDFPLASIASRRALFLAALSITIGTGVYVGVVVALIAYLSKPGHI.

Residues M1–L182 lie on the Extracellular side of the membrane. The helical transmembrane segment at G183–F203 threads the bilayer. At S204–F228 the chain is on the cytoplasmic side. The helical transmembrane segment at L229–I249 threads the bilayer. The Extracellular portion of the chain corresponds to A250–I258.

It belongs to the CD225/Dispanin family.

Its subcellular location is the membrane. The protein localises to the golgi apparatus. It is found in the cis-Golgi network. This chain is Synapse differentiation-inducing gene protein 1-like (syndig1l), found in Danio rerio (Zebrafish).